Consider the following 270-residue polypeptide: ATP synthase subunit b 1 (270 aa).

The chain crosses the membrane as a helical span at residues 2–22 (LIDWFTVIAQLINFLVLVWLL).

It belongs to the ATPase B chain family. F-type ATPases have 2 components, F(1) - the catalytic core - and F(0) - the membrane proton channel. F(1) has five subunits: alpha(3), beta(3), gamma(1), delta(1), epsilon(1). F(0) has three main subunits: a(1), b(2) and c(10-14). The alpha and beta chains form an alternating ring which encloses part of the gamma chain. F(1) is attached to F(0) by a central stalk formed by the gamma and epsilon chains, while a peripheral stalk is formed by the delta and b chains.

Its subcellular location is the cell inner membrane. Its function is as follows. F(1)F(0) ATP synthase produces ATP from ADP in the presence of a proton or sodium gradient. F-type ATPases consist of two structural domains, F(1) containing the extramembraneous catalytic core and F(0) containing the membrane proton channel, linked together by a central stalk and a peripheral stalk. During catalysis, ATP synthesis in the catalytic domain of F(1) is coupled via a rotary mechanism of the central stalk subunits to proton translocation. Functionally, component of the F(0) channel, it forms part of the peripheral stalk, linking F(1) to F(0). This Marinomonas sp. (strain MWYL1) protein is ATP synthase subunit b 1.